Here is a 1013-residue protein sequence, read N- to C-terminus: MGTGPLTSGVRAGGGNTGWLWMSSCNLGSPVLPISFLFWLLLAAPGARAAGYKTCPPTKPGMLNVHLLPHTHDDVGWLKTVDQYYYGILSDVQHASVQYILDSVVSSLLEKPTRRFIYVEMAFFSRWWKQQTSATQDAVRNLVRQGRLEFVNGGWVMNDEAATHYGAIVDQMTLGLRFLQDTFGSDGLPRVAWHIDPFGHSREQASLFAQMGFDGFFLGRIDYQDKLNRKKKLRMEELWRASDSLEPPAADLFTGVLPNNYNPPKYLCWDVLCTDPPVVDNPRSPEFNAKTLVNYFLKLASSQKGFYRTNHTVMTMGSDFHYENANMWFKNMDKLIRLVNAQQVNGSLVHVLYSTPTCYLWELNKANLTWTVKEDDFFPYADGPHMFWTGYFSSRPALKRYERLSYNFLQVCNQLEALVGPEANVGPYGSGDSAPLQEAMAVLQHHDAVSGTARQNVVNDYARQLAAGWGPCEVLVSNALARLSHYKQNFSFCRELNISICPVSQTSERFQVTLYNPLGRKVDQMVRLPVYEGNFIVKDPHDKNISSNVVMVPSYYSETYQWELLFPASVPALGFSTYSVAKMSDLNHQAHNLLSRPRKHKSHHVLVIENKYMRATFDSGTGLLMKIENLEQNLSLPVSQGFFWYNASVGDEESSQASGAYIFRPNVGKPIPVSRWAQISLVKTALVQEVHQNFSAWCSQVIRLYKGQRHLELEWTVGPIPVRDDWGKEVISRFDTPMKTKGQFFTDSNGREILKRRDDYRPTWTLNQTEPVAGNYYPVNTRIYITDGQMQLTVLTDRSQGGSSLQDGSLELMVHRRLLVDDDRGVSEPLLETDTGDKVRGRHLVLLSSVSDAAARHRLLAEQEVLAPQVVLSLGGSSPYHSRATPKTQFSGLRQELPPQVHLLTLARWGPKMLLLRLEHQFALKEDSDRNLSSPVTLNVQNLFQTFTINYLQETTLAANQPLSRASRLKWMTNTGPTSYPEPSKLDPTSVTLKPMEIRTFLASVQWQEHRPA.

An N-terminal signal peptide occupies residues 1 to 49 (MGTGPLTSGVRAGGGNTGWLWMSSCNLGSPVLPISFLFWLLLAAPGARA). 2 disulfides stabilise this stretch: C55–C358 and C268–C273. The Zn(2+) site is built by H72, D74, and D196. The active-site Nucleophile is the D196. Residues N310, N345, and N367 are each glycosylated (N-linked (GlcNAc...) asparagine). The cysteines at positions 412 and 472 are disulfide-linked. H446 contributes to the Zn(2+) binding site. Residues N489, N497, N544, N633, N646, N693, N767, and N931 are each glycosylated (N-linked (GlcNAc...) asparagine). A disulfide bridge connects residues C493 and C501.

This sequence belongs to the glycosyl hydrolase 38 family. It depends on Zn(2+) as a cofactor.

The protein resides in the lysosome. It carries out the reaction Hydrolysis of terminal, non-reducing alpha-D-mannose residues in alpha-D-mannosides.. Its function is as follows. Necessary for the catabolism of N-linked carbohydrates released during glycoprotein turnover. This is Lysosomal alpha-mannosidase (Man2b1) from Mus musculus (Mouse).